We begin with the raw amino-acid sequence, 186 residues long: Transcription factor FapR (186 aa).

This sequence belongs to the FapR family.

In terms of biological role, transcriptional factor involved in regulation of membrane lipid biosynthesis by repressing genes involved in fatty acid and phospholipid metabolism. The chain is Transcription factor FapR from Halalkalibacterium halodurans (strain ATCC BAA-125 / DSM 18197 / FERM 7344 / JCM 9153 / C-125) (Bacillus halodurans).